Here is a 120-residue protein sequence, read N- to C-terminus: Small ribosomal subunit protein eS24 (120 aa).

Residues 101-120 (RDAGTKQKKGGSKGGQGAKG) form a disordered region.

The protein belongs to the eukaryotic ribosomal protein eS24 family.

In Saccharolobus solfataricus (strain ATCC 35092 / DSM 1617 / JCM 11322 / P2) (Sulfolobus solfataricus), this protein is Small ribosomal subunit protein eS24.